Here is a 50-residue protein sequence, read N- to C-terminus: NLYQFSNMIQCTIPGSDPLSDYGNYGCYCGYGGSGTPVDELLRCCQVHDD.

Ca(2+) is bound by residues tyrosine 28, glycine 30, and glycine 32. Cysteine 29 and cysteine 45 are disulfide-bonded. The active site involves histidine 48. Aspartate 49 lines the Ca(2+) pocket.

Requires Ca(2+) as cofactor. Expressed by the venom gland.

The protein localises to the secreted. The enzyme catalyses a 1,2-diacyl-sn-glycero-3-phosphocholine + H2O = a 1-acyl-sn-glycero-3-phosphocholine + a fatty acid + H(+). Its activity is regulated as follows. Inhibited by EDTA. PLA2 catalyzes the calcium-dependent hydrolysis of the 2-acyl groups in 3-sn-phosphoglycerides. The sequence is that of Phospholipase A2 trimorphin from Trimorphodon lambda (Sonoran lyre snake).